A 121-amino-acid chain; its full sequence is MVRKITKTNPNLIKLIRNLRKKSSQEGAAIWKDVARRLERPTRNRAAVNISKINRHSDEDETVLVPGKVLGSGNLDHRVQVVALSFSQTARDKIERAGGECLTLGKIVEENPAIKNIKIIE.

This sequence belongs to the eukaryotic ribosomal protein eL18 family.

This is Large ribosomal subunit protein eL18 from Methanothermobacter thermautotrophicus (strain ATCC 29096 / DSM 1053 / JCM 10044 / NBRC 100330 / Delta H) (Methanobacterium thermoautotrophicum).